A 502-amino-acid chain; its full sequence is Serine/threonine-protein kinase SKS1 (502 aa).

The Protein kinase domain maps to 10–338 (FRITAQIGSG…SEVSSLTSFT (329 aa)). ATP-binding positions include 16-24 (IGSGAYGLV) and Lys-39. The Proton acceptor role is filled by Asp-186. 2 stretches are compositionally biased toward low complexity: residues 376-391 (QEQQQQQQQQQQQVQE) and 399-410 (EQIQNQEQAQQQ). The segment at 376-439 (QEQQQQQQQQ…GSMEKYEYTN (64 aa)) is disordered. Over residues 411–420 (QEEEDAEPES) the composition is skewed to acidic residues.

This sequence belongs to the protein kinase superfamily. Ser/Thr protein kinase family.

The catalysed reaction is L-seryl-[protein] + ATP = O-phospho-L-seryl-[protein] + ADP + H(+). It carries out the reaction L-threonyl-[protein] + ATP = O-phospho-L-threonyl-[protein] + ADP + H(+). In terms of biological role, may have a role in glucose regulation. The chain is Serine/threonine-protein kinase SKS1 (SKS1) from Saccharomyces cerevisiae (strain ATCC 204508 / S288c) (Baker's yeast).